A 364-amino-acid chain; its full sequence is Zinc finger protein 474 (364 aa).

Residues 1 to 10 (MERGKKKRIS) are compositionally biased toward basic residues. Disordered regions lie at residues 1-21 (MERG…HHSK) and 37-60 (SYSS…DTQK). The segment at 93–122 (GFRVCYICGREFGSQSIAIHEPQCLQKWHI) adopts a C2HC/C3H-type 1 zinc-finger fold. Positions 97, 100, 112, and 116 each coordinate Zn(2+). The interval 127–147 (LPKHLRRPEPSKPQSLSSSGS) is disordered. The span at 138 to 147 (KPQSLSSSGS) shows a compositional bias: low complexity. 3 C2HC/C3H-type zinc fingers span residues 164–193 (QLLP…KGEG), 220–249 (RTVI…KWKM), and 283–312 (QLVF…HPYG). Residues Cys-168, Cys-171, His-183, Cys-187, Cys-224, Cys-227, His-239, Cys-243, Cys-287, Cys-290, His-302, and Cys-306 each coordinate Zn(2+). Positions 187–214 (CKPKGEGPRAPHSNSSDHLTGLKKACSG) are disordered.

It depends on Zn(2+) as a cofactor.

The chain is Zinc finger protein 474 (ZNF474) from Homo sapiens (Human).